We begin with the raw amino-acid sequence, 396 residues long: MTTLLIDNIGSLVTNDPTLDAGPLGVLRDAAVVVEDGRIAWYGATSAAPAADTRLDAAGRAVIPGFVDSHAHLVFAGDRSEEFAARMSGTPYQAGGIRTTVTATRDATDATLKSTVTRLAAEALRSGTTTLECKSGYGLTVEQELRSLQVAAEITDEVTFMGAHVVPPEYAETPDDYVELVCTAMLDACAPAAKWVDVFCERGAFDLDQSRAILQAGIARGLQPRVHANQLGPGPGVQLAVECNAASADHVTHVSDADIAALAGSNTVATLLPAAEFSTRAAYPDGRRLIDAGVTVALSPDCNPGSSFTTNMPFCIAVAVREMHLTPDEAVWAATAGGARALRRDDVGHLAVGARADLALLDAPSHIHLAYRPGVPLVAAVLRNGEIVWQTKEVTS.

The Fe(3+) site is built by H70 and H72. Positions 70 and 72 each coordinate Zn(2+). 4-imidazolone-5-propanoate contacts are provided by R79, Y137, and H164. Y137 provides a ligand contact to N-formimidoyl-L-glutamate. H227 provides a ligand contact to Fe(3+). A Zn(2+)-binding site is contributed by H227. Q230 contributes to the 4-imidazolone-5-propanoate binding site. Fe(3+) is bound at residue D301. D301 contacts Zn(2+). The N-formimidoyl-L-glutamate site is built by N303 and G305. S306 serves as a coordination point for 4-imidazolone-5-propanoate.

This sequence belongs to the metallo-dependent hydrolases superfamily. HutI family. The cofactor is Zn(2+). Fe(3+) serves as cofactor.

It localises to the cytoplasm. It carries out the reaction 4-imidazolone-5-propanoate + H2O = N-formimidoyl-L-glutamate. The protein operates within amino-acid degradation; L-histidine degradation into L-glutamate; N-formimidoyl-L-glutamate from L-histidine: step 3/3. Catalyzes the hydrolytic cleavage of the carbon-nitrogen bond in imidazolone-5-propanoate to yield N-formimidoyl-L-glutamate. It is the third step in the universal histidine degradation pathway. In Mycolicibacterium smegmatis (strain ATCC 700084 / mc(2)155) (Mycobacterium smegmatis), this protein is Imidazolonepropionase.